Reading from the N-terminus, the 378-residue chain is Queuine tRNA-ribosyltransferase (378 aa).

The Proton acceptor role is filled by Asp-91. Substrate is bound by residues 91–95, Asp-145, Gln-189, and Gly-216; that span reads DSGGF. The RNA binding stretch occupies residues 247–253; sequence GVGKPED. The active-site Nucleophile is the Asp-266. The RNA binding; important for wobble base 34 recognition stretch occupies residues 271–275; it reads TRNAR. Residues Cys-304, Cys-306, Cys-309, and His-335 each contribute to the Zn(2+) site.

Belongs to the queuine tRNA-ribosyltransferase family. As to quaternary structure, homodimer. Within each dimer, one monomer is responsible for RNA recognition and catalysis, while the other monomer binds to the replacement base PreQ1. It depends on Zn(2+) as a cofactor.

The catalysed reaction is 7-aminomethyl-7-carbaguanine + guanosine(34) in tRNA = 7-aminomethyl-7-carbaguanosine(34) in tRNA + guanine. It functions in the pathway tRNA modification; tRNA-queuosine biosynthesis. Catalyzes the base-exchange of a guanine (G) residue with the queuine precursor 7-aminomethyl-7-deazaguanine (PreQ1) at position 34 (anticodon wobble position) in tRNAs with GU(N) anticodons (tRNA-Asp, -Asn, -His and -Tyr). Catalysis occurs through a double-displacement mechanism. The nucleophile active site attacks the C1' of nucleotide 34 to detach the guanine base from the RNA, forming a covalent enzyme-RNA intermediate. The proton acceptor active site deprotonates the incoming PreQ1, allowing a nucleophilic attack on the C1' of the ribose to form the product. After dissociation, two additional enzymatic reactions on the tRNA convert PreQ1 to queuine (Q), resulting in the hypermodified nucleoside queuosine (7-(((4,5-cis-dihydroxy-2-cyclopenten-1-yl)amino)methyl)-7-deazaguanosine). This is Queuine tRNA-ribosyltransferase from Vibrio atlanticus (strain LGP32) (Vibrio splendidus (strain Mel32)).